A 340-amino-acid chain; its full sequence is Phosphoribosylformylglycinamidine cyclo-ligase (340 aa).

Belongs to the AIR synthase family.

Its subcellular location is the cytoplasm. It carries out the reaction 2-formamido-N(1)-(5-O-phospho-beta-D-ribosyl)acetamidine + ATP = 5-amino-1-(5-phospho-beta-D-ribosyl)imidazole + ADP + phosphate + H(+). The protein operates within purine metabolism; IMP biosynthesis via de novo pathway; 5-amino-1-(5-phospho-D-ribosyl)imidazole from N(2)-formyl-N(1)-(5-phospho-D-ribosyl)glycinamide: step 2/2. The chain is Phosphoribosylformylglycinamidine cyclo-ligase from Streptococcus pneumoniae (strain 70585).